The chain runs to 259 residues: Phosphatidylinositol transfer protein 2 (259 aa).

Residues 231-259 (LTIEDIRKIEEETKAELAKKLEENKAANK) adopt a coiled-coil conformation.

This sequence belongs to the PtdIns transfer protein family. PI transfer class IIA subfamily.

Its subcellular location is the cytoplasm. It is found in the golgi apparatus. Functionally, catalyzes the transfer of PtdIns and phosphatidylcholine between membranes. This is Phosphatidylinositol transfer protein 2 (pitB) from Dictyostelium discoideum (Social amoeba).